A 111-amino-acid polypeptide reads, in one-letter code: Toxin 3FTx-Tri3 (111 aa).

Residues 1–19 (MKTLLLALVVVAFMCLGSA) form the signal peptide. The propeptide occupies 20-34 (DEVGLGNEQIDRGRR). The residue at position 35 (glutamine 35) is a Pyrrolidone carboxylic acid. 4 disulfide bridges follow: cysteine 44-cysteine 68, cysteine 47-cysteine 87, cysteine 91-cysteine 102, and cysteine 103-cysteine 108.

It belongs to the three-finger toxin family. Ancestral subfamily. Boigatoxin sub-subfamily. Expressed by the venom gland.

The protein localises to the secreted. Its function is as follows. Potent postsynaptic neurotoxin. Displays readily reversible competitive antagonism at the nicotinic acetylcholine receptor (nAChR). In Trimorphodon biscutatus (Western lyre snake), this protein is Toxin 3FTx-Tri3.